Here is a 1315-residue protein sequence, read N- to C-terminus: Chaoptin (1315 aa).

The signal sequence occupies residues 1–29; the sequence is MGLEFFFKFGYAFLTITLMIMIWMSLARA. Residue Asn-77 is glycosylated (N-linked (GlcNAc...) (high mannose) asparagine; alternate). Residue Asn-77 is glycosylated (N-linked (GlcNAc...) (paucimannose) asparagine; alternate). LRR repeat units follow at residues 80-101, 103-124, 128-149, 152-173, 177-198, 201-222, 226-247, 250-271, and 279-300; these read KVFMLHMENTGLREIEPYFLQS, GMYRLKISGNHLTEIPDDAFTG, SLWELILPQNDLVEIPSKSLRH, KLRHLDLGYNHITHIQHDSFRG, SLQTLILRENCISQLMSHSFSG, ILETLDLSGNNLFEIDPNVFVD, RLTRLLLTDNILSEIPYDALGP, SLRTLDISHNVIWSLSGNETYE, and NLDNLHLEYNHIEVLPPNSFKY. N-linked (GlcNAc...) (paucimannose) asparagine; alternate glycosylation is present at Asn-267. The N-linked (GlcNAc...) (complex) asparagine; alternate glycan is linked to Asn-267. N-linked (GlcNAc...) (high mannose) asparagine; alternate glycosylation occurs at Asn-305. A glycan (N-linked (GlcNAc...) (paucimannose) asparagine; alternate) is linked at Asn-305. LRR repeat units follow at residues 326–347, 351–372, 375–396, 401–424, 477–498, 527–548, 551–572, 577–598, 601–622, 625–646, 649–670, 676–696, 708–729, 733–754, 757–778, 781–802, 805–826, 828–849, 854–875, 879–900, 903–924, 928–948, 949–970, 973–994, 996–1017, 1021–1044, and 1045–1066; these read RIREIYMRYCGLTNISPVAFDS, SLQILDLSGNNLTKLHHKLFNN, VLRVISMRDNKIKIQKPTETFN, TLLKLDLSGDRNDPTNLQTLRNMT, GLKRLDFSENGISSIENDAFHE, SLQELDFSNNHISSMSDTSFHF, NLRLLELHDNRIEQVLKGTFQG, KLEEISLRFNHLTSISQHTFFD, ALRKLHLDDNKIDKIERRAFMN, ELEYLSLRGNKINNLADESFQN, KLEILDMAFNQLPNFNFDYFDQ, NLNVNVSHNQIRQLMYNSSWS, NIKILDLSHNNISIIHPGYFRP, SLTHLHLGYNSLMNTTRDVFGN, HLQWLDLSYNWIHELDFDAFKN, QLQLVFFGHNYLSDIPQDIFKP, GLRIVDFSHNHLRGLPDNLFYN, GMEKLDVSHNMMLKIPSSSLSS, TLCELHLSNNFISTIHSMDLSN, SLRYLDISYNYLLRIDDAVFAT, KLAVLDLSHNRDLKVMDKSFMG, SLIKLGLENISLSTVPEIRLK, YLREFRLGYNELPSIPQELAHN, NLRMLDLSNNDLTNVPLMTQAL, HLRRLMLSGNPITSLNNNSFDG, DLEMLDISNFRLHYFEYGCLDSLP, and HLRSLKLTAYSHLEHFNIPHLL. The N-linked (GlcNAc...) (high mannose) asparagine glycan is linked to Asn-361. Asn-422 carries N-linked (GlcNAc...) asparagine glycosylation. N-linked (GlcNAc...) (high mannose) asparagine glycosylation occurs at Asn-680. Asn-692 carries N-linked (GlcNAc...) (high mannose) asparagine; alternate glycosylation. The N-linked (GlcNAc...) (paucimannose) asparagine; alternate glycan is linked to Asn-692. The N-linked (GlcNAc...) (high mannose) asparagine glycan is linked to Asn-718. Asn-746 carries N-linked (GlcNAc...) asparagine glycosylation. N-linked (GlcNAc...) (high mannose) asparagine glycosylation occurs at Asn-936. N-linked (GlcNAc...) (paucimannose) asparagine glycosylation occurs at Asn-970. An N-linked (GlcNAc...) (complex) asparagine glycan is attached at Asn-1012. N-linked (GlcNAc...) (high mannose) asparagine glycosylation is found at Asn-1122, Asn-1152, and Asn-1171. The 64-residue stretch at 1211–1274 folds into the LRRCT domain; that stretch reads TDLNCDCDLG…DDLRETRCEN (64 aa).

The protein belongs to the chaoptin family. As to expression, expressed in photoreceptor cells and their axons in the adult retina, the ocellus and larval photoreceptor organ.

Its subcellular location is the cell membrane. In terms of biological role, required for photoreceptor cell morphogenesis. Mediates homophilic cellular adhesion. The chain is Chaoptin (chp) from Drosophila melanogaster (Fruit fly).